A 377-amino-acid chain; its full sequence is UPF0425 pyridoxal phosphate-dependent protein MTH_1914 (377 aa).

At Lys-207 the chain carries N6-(pyridoxal phosphate)lysine.

It belongs to the UPF0425 family. Requires pyridoxal 5'-phosphate as cofactor.

In Methanothermobacter thermautotrophicus (strain ATCC 29096 / DSM 1053 / JCM 10044 / NBRC 100330 / Delta H) (Methanobacterium thermoautotrophicum), this protein is UPF0425 pyridoxal phosphate-dependent protein MTH_1914.